Here is a 526-residue protein sequence, read N- to C-terminus: Phosphoenolpyruvate carboxylase (526 aa).

Belongs to the PEPCase type 2 family. In terms of assembly, homotetramer. Mg(2+) serves as cofactor.

The enzyme catalyses oxaloacetate + phosphate = phosphoenolpyruvate + hydrogencarbonate. Functionally, catalyzes the irreversible beta-carboxylation of phosphoenolpyruvate (PEP) to form oxaloacetate (OAA), a four-carbon dicarboxylic acid source for the tricarboxylic acid cycle. This is Phosphoenolpyruvate carboxylase from Methanosarcina acetivorans (strain ATCC 35395 / DSM 2834 / JCM 12185 / C2A).